Reading from the N-terminus, the 375-residue chain is MIALLILSLACSVSAYRLQGFINAGILAYKNIQNGDEDDNDNIVFSPFGYSFSMFMSLLSASGNTRVELLNTMNLRKRDLGPAFTELISGLAKMKTSKYTYTDLTYQSFVDSTVCIKPSYYQQYHRFGLYRLNFRRDAVNKINSIVERRSGMSNVVDSTMLDDNTLWAIINTIYFKGTWQYPFDITKTHNASFTNKYGTKTVPMMNVVTKLQGNTITIDDEEYDMVRLLYKDANISMYLAIGDNMTHFTDSITPAKLEYWSSQLGNKMYNLKLPRFSIENKRDIKSIAEMMAPSMFNPDKASFKHMTRDPLYIYKMFQNVKIDVDEQGTVAEASTIMVATARSSPEELEFNTPFVFIIRHDITGFILFMGKVEYT.

The N-terminal stretch at 1–15 (MIALLILSLACSVSA) is a signal peptide.

This sequence belongs to the serpin family. Orthopoxvirus OPG040 subfamily. In terms of assembly, interacts with OPG185/A56 protein.

It is found in the virion membrane. It localises to the host cell membrane. Negatively regulates superinfection and syncytium formation in infected host cells. Acts in concert with OPG185/A56 protein at the host cell membrane by interacting with and inhibiting the mature virion entry/fusion complex (EFC). This mechanism ensures that new virions released from the cell cannot enter already infected cells. This chain is Superinfection exclusion protein (OPG040), found in Cynomys gunnisoni (Gunnison's prairie dog).